Here is a 345-residue protein sequence, read N- to C-terminus: Golgi-associated RAB2 interactor protein 1B (345 aa).

Disordered stretches follow at residues 222–241 (CSPS…SQPS) and 271–299 (SRSS…PCTR). Residues 275-285 (KKTENKKDSSG) are compositionally biased toward basic and acidic residues.

It belongs to the GARIN family.

It localises to the golgi apparatus. In terms of biological role, RAB2B effector protein required for accurate acrosome formation and normal male fertility. In complex with RAB2A/RAB2B, seems to suppress excessive vesicle trafficking during acrosome formation. In Bos taurus (Bovine), this protein is Golgi-associated RAB2 interactor protein 1B (GARIN1B).